A 662-amino-acid chain; its full sequence is 72 kDa type IV collagenase (662 aa).

The first 29 residues, 1–29, serve as a signal peptide directing secretion; the sequence is MEARVAWGALAGPLRVLCVLCCLLGRAIA. The propeptide at 30–109 is activation peptide; the sequence is APSPIIKFPG…PRCGNPDVAN (80 aa). Positions 100-107 match the Cysteine switch motif; that stretch reads PRCGNPDV. Cysteine 102 contacts Zn(2+). Residues 110–221 form a collagenase-like 1 region; it reads YNFFPRKPKW…LWTLGEGQVV (112 aa). The Ca(2+) site is built by aspartate 134 and aspartate 168. Zn(2+) contacts are provided by histidine 178 and aspartate 180. Residues aspartate 185 and glycine 186 each coordinate Ca(2+). Histidine 193 serves as a coordination point for Zn(2+). Positions 200, 202, and 204 each coordinate Ca(2+). Position 206 (histidine 206) interacts with Zn(2+). Ca(2+)-binding residues include aspartate 208, aspartate 209, and glutamate 211. The collagen-binding stretch occupies residues 222 to 396; sequence RVKYGNADGE…WGFCPDQGYS (175 aa). Fibronectin type-II domains are found at residues 228–276, 286–334, and 344–392; these read ADGE…FCPH, ADGQ…FCPE, and SEGA…FCPD. Disulfide bonds link cysteine 233/cysteine 259, cysteine 247/cysteine 274, cysteine 291/cysteine 317, cysteine 305/cysteine 332, cysteine 349/cysteine 375, and cysteine 363/cysteine 390. Residues 397-467 are collagenase-like 2; it reads LFLVAAHEFG…GPTPTLGPVT (71 aa). Residue histidine 403 participates in Zn(2+) binding. Glutamate 404 is an active-site residue. 2 residues coordinate Zn(2+): histidine 407 and histidine 413. The interval 414–662 is required for inhibitor TIMP2 binding; that stretch reads SQDPGALMAP…GSIKSDWLGC (249 aa). Positions 446–465 are disordered; it reads GPSPDADTDTGTGPTPTLGP. A disulfide bond links cysteine 471 and cysteine 662. Hemopexin repeat units lie at residues 474-518, 519-565, 567-615, and 616-662; these read DIVF…WPEL, PEKI…GLPP, VQQV…WNAI, and PDNL…WLGC. Aspartate 478, aspartate 523, and aspartate 571 together coordinate Ca(2+). The N-linked (GlcNAc...) asparagine glycan is linked to asparagine 575. Aspartate 620 provides a ligand contact to Ca(2+). Asparagine 644 is a glycosylation site (N-linked (GlcNAc...) asparagine).

Belongs to the peptidase M10A family. In terms of assembly, interacts (via the C-terminal hemopexin-like domains-containing region) with the integrin alpha-V/beta-3; the interaction promotes vascular invasion in angiogenic vessels and melamoma cells. Interacts (via the C-terminal PEX domain) with TIMP2 (via the C-terminal); the interaction inhibits the degradation activity. Interacts with GSK3B. Ca(2+) serves as cofactor. Requires Zn(2+) as cofactor. Phosphorylation on multiple sites modulates enzymatic activity. Phosphorylated by PKC in vitro. Post-translationally, the propeptide is processed by MMP14 (MT-MMP1) and MMP16 (MT-MMP3). Autocatalytic cleavage in the C-terminal produces the anti-angiogenic peptide, PEX. This processing appears to be facilitated by binding integrinv/beta3.

The protein localises to the secreted. It is found in the extracellular space. It localises to the extracellular matrix. The protein resides in the membrane. Its subcellular location is the nucleus. The protein localises to the cytoplasm. It is found in the mitochondrion. It carries out the reaction Cleavage of gelatin type I and collagen types IV, V, VII, X. Cleaves the collagen-like sequence Pro-Gln-Gly-|-Ile-Ala-Gly-Gln.. Its function is as follows. Ubiquitinous metalloproteinase that is involved in diverse functions such as remodeling of the vasculature, angiogenesis, tissue repair, tumor invasion, inflammation, and atherosclerotic plaque rupture. As well as degrading extracellular matrix proteins, can also act on several nonmatrix proteins such as big endothelial 1 and beta-type CGRP promoting vasoconstriction. Also cleaves KISS at a Gly-|-Leu bond. Appears to have a role in myocardial cell death pathways. Contributes to myocardial oxidative stress by regulating the activity of GSK3beta. Cleaves GSK3beta in vitro. Involved in the formation of the fibrovascular tissues. In terms of biological role, PEX, the C-terminal non-catalytic fragment of MMP2, possesses anti-angiogenic and anti-tumor properties and inhibits cell migration and cell adhesion to FGF2 and vitronectin. Ligand for integrin alpha-v/beta-3 on the surface of blood vessels. Functionally, mediates the proteolysis of CHUK/IKKA and initiates a primary innate immune response by inducing mitochondrial-nuclear stress signaling with activation of the pro-inflammatory NF-kappaB, NFAT and IRF transcriptional pathways. This Mus musculus (Mouse) protein is 72 kDa type IV collagenase (Mmp2).